The following is a 272-amino-acid chain: Tryptophan synthase alpha chain (272 aa).

Catalysis depends on proton acceptor residues Glu49 and Asp60.

It belongs to the TrpA family. As to quaternary structure, tetramer of two alpha and two beta chains.

The enzyme catalyses (1S,2R)-1-C-(indol-3-yl)glycerol 3-phosphate + L-serine = D-glyceraldehyde 3-phosphate + L-tryptophan + H2O. It functions in the pathway amino-acid biosynthesis; L-tryptophan biosynthesis; L-tryptophan from chorismate: step 5/5. Functionally, the alpha subunit is responsible for the aldol cleavage of indoleglycerol phosphate to indole and glyceraldehyde 3-phosphate. This chain is Tryptophan synthase alpha chain, found in Polaromonas sp. (strain JS666 / ATCC BAA-500).